We begin with the raw amino-acid sequence, 279 residues long: HTH-type transcriptional regulator HdfR (279 aa).

Residues 1–58 form the HTH lysR-type domain; the sequence is MDTELLKTFLEVSRTRHFGRAAESLYLTQSAVSFRIRQLENQLGVNLFTRHRNNIRLT. The segment at residues 18–37 is a DNA-binding region (H-T-H motif); that stretch reads FGRAAESLYLTQSAVSFRIR.

It belongs to the LysR transcriptional regulatory family.

Functionally, negatively regulates the transcription of the flagellar master operon flhDC by binding to the upstream region of the operon. The sequence is that of HTH-type transcriptional regulator HdfR from Escherichia coli (strain SE11).